The sequence spans 37 residues: Rugosin-C (37 aa).

Cysteine 31 and cysteine 37 are oxidised to a cystine.

This sequence belongs to the frog skin active peptide (FSAP) family. Brevinin subfamily. Expressed by the skin glands.

The protein localises to the secreted. Its function is as follows. Has antibacterial activity against Gram-positive bacteria. In Glandirana rugosa (Japanese wrinkled frog), this protein is Rugosin-C.